Reading from the N-terminus, the 98-residue chain is Large ribosomal subunit protein uL23 (98 aa).

Belongs to the universal ribosomal protein uL23 family. Part of the 50S ribosomal subunit. Contacts protein L29, and trigger factor when it is bound to the ribosome.

Its function is as follows. One of the early assembly proteins it binds 23S rRNA. One of the proteins that surrounds the polypeptide exit tunnel on the outside of the ribosome. Forms the main docking site for trigger factor binding to the ribosome. The polypeptide is Large ribosomal subunit protein uL23 (Bordetella petrii (strain ATCC BAA-461 / DSM 12804 / CCUG 43448)).